We begin with the raw amino-acid sequence, 408 residues long: LL-diaminopimelate aminotransferase (408 aa).

2 residues coordinate substrate: tyrosine 15 and glycine 42. Pyridoxal 5'-phosphate is bound by residues tyrosine 72, 108 to 109 (SK), tyrosine 132, asparagine 187, tyrosine 218, and 246 to 248 (SFS). Substrate-binding residues include lysine 109, tyrosine 132, and asparagine 187. Residue lysine 249 is modified to N6-(pyridoxal phosphate)lysine. Pyridoxal 5'-phosphate contacts are provided by arginine 257 and asparagine 292. Substrate is bound by residues asparagine 292 and arginine 388.

Belongs to the class-I pyridoxal-phosphate-dependent aminotransferase family. LL-diaminopimelate aminotransferase subfamily. Homodimer. It depends on pyridoxal 5'-phosphate as a cofactor.

It carries out the reaction (2S,6S)-2,6-diaminopimelate + 2-oxoglutarate = (S)-2,3,4,5-tetrahydrodipicolinate + L-glutamate + H2O + H(+). It participates in amino-acid biosynthesis; L-lysine biosynthesis via DAP pathway; LL-2,6-diaminopimelate from (S)-tetrahydrodipicolinate (aminotransferase route): step 1/1. Its function is as follows. Involved in the synthesis of meso-diaminopimelate (m-DAP or DL-DAP), required for both lysine and peptidoglycan biosynthesis. Catalyzes the direct conversion of tetrahydrodipicolinate to LL-diaminopimelate. In Prochlorococcus marinus (strain AS9601), this protein is LL-diaminopimelate aminotransferase.